We begin with the raw amino-acid sequence, 321 residues long: Ferredoxin--NADP reductase (321 aa).

FAD contacts are provided by D28, Q36, Y41, A81, F115, D274, and S315.

It belongs to the ferredoxin--NADP reductase type 2 family. In terms of assembly, homodimer. It depends on FAD as a cofactor.

It carries out the reaction 2 reduced [2Fe-2S]-[ferredoxin] + NADP(+) + H(+) = 2 oxidized [2Fe-2S]-[ferredoxin] + NADPH. The sequence is that of Ferredoxin--NADP reductase from Frankia casuarinae (strain DSM 45818 / CECT 9043 / HFP020203 / CcI3).